The sequence spans 296 residues: Fructose-bisphosphate aldolase class 1 (296 aa).

Glu-175 acts as the Proton acceptor in catalysis. Lys-212 functions as the Schiff-base intermediate with dihydroxyacetone-P in the catalytic mechanism.

The protein belongs to the class I fructose-bisphosphate aldolase family.

It carries out the reaction beta-D-fructose 1,6-bisphosphate = D-glyceraldehyde 3-phosphate + dihydroxyacetone phosphate. It participates in carbohydrate degradation; glycolysis; D-glyceraldehyde 3-phosphate and glycerone phosphate from D-glucose: step 4/4. This chain is Fructose-bisphosphate aldolase class 1 (fda), found in Staphylococcus epidermidis (strain ATCC 12228 / FDA PCI 1200).